We begin with the raw amino-acid sequence, 168 residues long: UPF0134 protein MPN_524 (168 aa).

It belongs to the UPF0134 family.

The protein is UPF0134 protein MPN_524 of Mycoplasma pneumoniae (strain ATCC 29342 / M129 / Subtype 1) (Mycoplasmoides pneumoniae).